A 155-amino-acid polypeptide reads, in one-letter code: Polyadenylate-binding protein-interacting protein 5 (155 aa).

A PAM2-like motif is present at residues 7 to 17 (ALNPHAASYVP). Residues 66 to 109 (DIDMDIEYLLVTFSGLSQESITDVYLANGGDLEATIEMLNQLEI) form the CUE domain. Residues 114–155 (SEENLPETLDIGDISESGPSTSKSTEVAASTSSVIPNAPVSA) form a disordered region. Positions 130–148 (SGPSTSKSTEVAASTSSVI) are enriched in polar residues.

In terms of tissue distribution, specifically expressed in immature siliques.

In terms of biological role, promotes polyploidy in dark-grown seedlings. Regulates the endocycle leading to hypocotyl elongation. This Arabidopsis thaliana (Mouse-ear cress) protein is Polyadenylate-binding protein-interacting protein 5 (CID5).